Reading from the N-terminus, the 311-residue chain is Formimidoylglutamase (311 aa).

6 residues coordinate Mn(2+): H130, D155, H157, D159, C242, and D244.

This sequence belongs to the arginase family. It depends on Mn(2+) as a cofactor.

It catalyses the reaction N-formimidoyl-L-glutamate + H2O = formamide + L-glutamate. It participates in amino-acid degradation; L-histidine degradation into L-glutamate; L-glutamate from N-formimidoyl-L-glutamate (hydrolase route): step 1/1. In terms of biological role, catalyzes the conversion of N-formimidoyl-L-glutamate to L-glutamate and formamide. The polypeptide is Formimidoylglutamase (Staphylococcus aureus (strain MSSA476)).